Here is a 68-residue protein sequence, read N- to C-terminus: Antimicrobial peptide Eval418 (68 aa).

The N-terminal stretch at 1 to 23 is a signal peptide; it reads MRTQLAVLLVALVLLQMIAQSEA. Residue I36 is modified to Isoleucine amide. The propeptide occupies 37 to 68; that stretch reads GKRGLRNLDDLDDVFDDDLSAADLEFLKQLMR.

It belongs to the non-disulfide-bridged peptide (NDBP) superfamily. Short antimicrobial peptide (group 4) family. In terms of tissue distribution, expressed by the venom gland.

The protein resides in the secreted. Probable antimicrobial peptide. Shows dose-dependent and time-dependent inactivation of herpes simplex virus type 1 (HSV-1) and dose-dependent inhibition of HSV-1 viral attachment to host cells. Scarcely suppress an established HSV-1 infection due to poor cellular uptake. This Euscorpiops validus (Scorpion) protein is Antimicrobial peptide Eval418.